Consider the following 783-residue polypeptide: Rho GTPase-activating protein gacR (783 aa).

Residues 138-188 are a coiled coil; that stretch reads AKNRFDKARLSFDEASEQFKQLRKKQNNINNEKLLEAEEDLDYATQQFSDI. A disordered region spans residues 262-299; sequence QFEQTNSSRTISLPPPPPPKPTSSTPSSSPSPSPSSSI. The span at 283–299 shows a compositional bias: low complexity; the sequence is TSSTPSSSPSPSPSSSI. Positions 319 to 509 constitute a Rho-GAP domain; the sequence is MALSTITERE…FIISNFNNIF (191 aa). Gly residues predominate over residues 527-539; that stretch reads GSSGGGGGGGSSG. The disordered stretch occupies residues 527–745; it reads GSSGGGGGGG…TTNSRPLSNS (219 aa). Low complexity-rich tracts occupy residues 568–589, 599–630, 641–651, and 661–698; these read SVNT…ASSA, PSSS…NINP, PKKISSSSNSL, and SIPE…RSST. The span at 706–738 shows a compositional bias: polar residues; that stretch reads NRVSMYLQNSNTGVPLPSQKPQRVISNNNTTTN.

It localises to the cytoplasm. Its function is as follows. Rho GTPase-activating protein involved in the signal transduction pathway. The polypeptide is Rho GTPase-activating protein gacR (gacR) (Dictyostelium discoideum (Social amoeba)).